The chain runs to 665 residues: Cyclic nucleotide-gated cation channel subunit A (665 aa).

Topologically, residues 1-110 (MRHFKVKAMV…DPTLQSHYRW (110 aa)) are cytoplasmic. The helical transmembrane segment at 111–131 (LAIVSLAVLYNIIFVVGRAVF) threads the bilayer. Residues 132 to 138 (WEINKSA) lie on the Extracellular side of the membrane. N135 carries N-linked (GlcNAc...) asparagine glycosylation. The chain crosses the membrane as a helical span at residues 139-159 (PAFWYTLDYLCDFIYLLDTLV). At 160 to 186 (HMHEGFLDQGLLVRDAFRLRRHYFHTK) the chain is on the cytoplasmic side. The chain crosses the membrane as a helical span at residues 187–207 (GWYLDVLSMLPTDLAYIWWPP). The Extracellular segment spans residues 208 to 253 (ETCSSLYLPCPVIVRLNRLLRINRLWEWFDRTETATGYPNAFRICK). The chain crosses the membrane as a helical span at residues 254 to 274 (VVLAILVLIHWNACMYFAISY). Over 275–325 (EIGFSSDSWVYNLNGTRNNTLQRQYIYSFYWSTLTLTTIGETPTPENDVEY) the chain is Cytoplasmic. A helical transmembrane segment spans residues 326 to 346 (LFVVADFLAGVLIFATIVGNI). The Extracellular segment spans residues 347-481 (GSMISNMNVA…GKLSVVGDDG (135 aa)). 3',5'-cyclic GMP is bound by residues 437–559 (LLEA…DGLL), E496, and R511. Residues 482-502 (ITVLATLGAGSVFGEVSVLEI) traverse the membrane as a helical segment. The Cytoplasmic portion of the chain corresponds to 503-665 (AGNRTGNRRT…SSDAAKQNTL (163 aa)). A disordered region spans residues 633–665 (RSGRLYSLQPKRRPRSRPDATAKSSDAAKQNTL). The span at 654-665 (AKSSDAAKQNTL) shows a compositional bias: polar residues.

Belongs to the cyclic nucleotide-gated cation channel (TC 1.A.1.5) family. As to expression, expressed in antennae and the visual system.

The protein resides in the membrane. Functionally, approximately 50-fold more sensitive to cGMP than to cAMP. May be involved in transduction cascades of both invertebrate photoreceptors and olfactory sensillae. This Drosophila melanogaster (Fruit fly) protein is Cyclic nucleotide-gated cation channel subunit A (CngA).